Consider the following 233-residue polypeptide: Probable septum site-determining protein MinC (233 aa).

The tract at residues 104-124 (QKMATPEPAPAPAPVVDPNAP) is disordered.

The protein belongs to the MinC family. In terms of assembly, interacts with MinD and FtsZ.

In terms of biological role, cell division inhibitor that blocks the formation of polar Z ring septums. Rapidly oscillates between the poles of the cell to destabilize FtsZ filaments that have formed before they mature into polar Z rings. Prevents FtsZ polymerization. This is Probable septum site-determining protein MinC from Serratia proteamaculans (strain 568).